Here is a 134-residue protein sequence, read N- to C-terminus: Small ribosomal subunit protein uS11 (134 aa).

A compositionally biased stretch (polar residues) spans 113–122 (SSITDATPQP). Residues 113–134 (SSITDATPQPHNGCRPTKRRKV) are disordered.

This sequence belongs to the universal ribosomal protein uS11 family. In terms of assembly, part of the 30S ribosomal subunit. Interacts with proteins S7 and S18. Binds to IF-3.

Its function is as follows. Located on the platform of the 30S subunit, it bridges several disparate RNA helices of the 16S rRNA. Forms part of the Shine-Dalgarno cleft in the 70S ribosome. In Corynebacterium aurimucosum (strain ATCC 700975 / DSM 44827 / CIP 107346 / CN-1) (Corynebacterium nigricans), this protein is Small ribosomal subunit protein uS11.